We begin with the raw amino-acid sequence, 455 residues long: MASFSILSIFKIGVGPSSSHTIGPMEAGARFCGLLKGILEQVERVQITLHGSLALTGKGHLSDEAVLIGLHGIYANELDITTKKALLHEAFENKVLKLANQHHIPFDYAKDLIFDNKPLARHQNALILKAFNAKNEVLKEETYYSVGGGFVYTEKELDNLSEEGENESVAYDFSSAKELLELCQKHQKSIAEIVRLRENALKNHPDATMTKIYHAMLECYHNGANSKERYLPGSLKVTRLAPSVKTRLEKHPTSGKDPLALIDYISLYARSIAEENASGGKVVTAPTNGACAVVPSVLSYAKNHLFENLSQKSINDFLLTSAAIGYLYKKNASLSGAEAGCQAEIGVASSMAAGGLAHLCQATTQQVLIASEIAMEHHLGLTCDPVGGLVQIPCIERNVLGAIKAISASKLALEDEYKPKVSLDEVIATMYATGKDMNEKYKETSLGGLAKTLKC.

The protein belongs to the iron-sulfur dependent L-serine dehydratase family. Requires [4Fe-4S] cluster as cofactor.

The catalysed reaction is L-serine = pyruvate + NH4(+). It functions in the pathway carbohydrate biosynthesis; gluconeogenesis. The chain is L-serine dehydratase (sdaA) from Helicobacter pylori (strain J99 / ATCC 700824) (Campylobacter pylori J99).